A 237-amino-acid chain; its full sequence is ATP synthase subunit a (237 aa).

Transmembrane regions (helical) follow at residues 18-38 (STLW…VGTL), 77-97 (IFTL…PMAF), 103-123 (IAVT…LGFM), 132-152 (LFWV…IEVI), 185-205 (LILF…AIVA), and 209-229 (LEIL…CVYL).

It belongs to the ATPase A chain family. As to quaternary structure, F-type ATPases have 2 components, CF(1) - the catalytic core - and CF(0) - the membrane proton channel. CF(1) has five subunits: alpha(3), beta(3), gamma(1), delta(1), epsilon(1). CF(0) has three main subunits: a(1), b(2) and c(9-12). The alpha and beta chains form an alternating ring which encloses part of the gamma chain. CF(1) is attached to CF(0) by a central stalk formed by the gamma and epsilon chains, while a peripheral stalk is formed by the delta and b chains.

The protein localises to the cellular chromatophore membrane. Functionally, key component of the proton channel; it plays a direct role in the translocation of protons across the membrane. The chain is ATP synthase subunit a from Rhodobacter capsulatus (Rhodopseudomonas capsulata).